Here is a 92-residue protein sequence, read N- to C-terminus: Small ribosomal subunit protein uS19c (92 aa).

It belongs to the universal ribosomal protein uS19 family.

The protein localises to the plastid. Its function is as follows. Protein S19 forms a complex with S13 that binds strongly to the 16S ribosomal RNA. The sequence is that of Small ribosomal subunit protein uS19c from Cuscuta exaltata (Tall dodder).